A 203-amino-acid chain; its full sequence is Sporulation delaying protein C (203 aa).

The N-terminal stretch at 1 to 32 is a signal peptide; that stretch reads MKSKLLRLLIVSMVTILVFSLVGLSKESSTSA. Residues 33 to 140 constitute a propeptide, removed in mature form; it reads KENHTFSGED…KYSSNKVTPS (108 aa). C141 and C147 are joined by a disulfide. The propeptide at 183–203 is removed in mature form; the sequence is SASNNSDLEAAAAKTLKLIHQ.

Proprotein probably interacts with chaperone CsaA. In terms of processing, production of active SDP (able to induce SdpI and kill cells) is a multi-step process that requires signal peptide cleavage (probably by SipS or SipT) as well as SdpA and SdpB. The disulfide bond is not required for maximum toxicity.

It localises to the secreted. In terms of biological role, produces a 42-residue extracellular sporulation delaying protein (SDP) that collapses the proton motive force (probably both the membrane potential and pH gradient) across the cell membrane, which leads to autolysis; may form a proton channel. Induces the lysis of other B.subtilis cells that have not entered the sporulation pathway, inducing cannibalism to provide a source of nutrients to support sporulation, and at the same time delaying commitment to the energetically expensive and irreversible onset of sporulation. Addition of SDP to liquid cultures halts growth, leads to increased cell permeability and eventually cell lysis in a significant subset of the population, although some cells survive and resume growth after a lag period. Effects of SDP are irreversible within 10 minutes. Addition of SDP to solid cultures induces killing, it is much more effective than SKF (AC O31422). Has antibiotic action against Gram-positive Firmicutes (L.acidophilus, M.megaterium, P.polymyxa, S.aureus, S.epidermidis) but not Actinobacteria M.luteus or Gram-negative P.aeruginosa or K.pneumoniae. SDP induces expression of the sdpR-sdpI operon. Its maturation is dependent on SdpA and SdpB. Also functions as a ligand, binds to SdpI triggering a signal transduction cascade that protects the cell against the toxic effects of its own SDP. In Bacillus subtilis (strain 168), this protein is Sporulation delaying protein C.